A 117-amino-acid polypeptide reads, in one-letter code: Immunoglobulin heavy variable 4-28 (117 aa).

A signal peptide spans 1 to 19; the sequence is MKHLWFFLLLVAAPRWVLS. The tract at residues 20-44 is framework-1; it reads QVQLQESGPGLVKPSDTLSLTCAVS. Positions 20–117 constitute an Ig-like domain; sequence QVQLQESGPG…VDTAVYYCAR (98 aa). A disulfide bridge links Cys41 with Cys115. Residues 45–53 form a complementarity-determining-1 region; sequence GYSISSSNW. A framework-2 region spans residues 54 to 70; that stretch reads WGWIRQPPGKGLEWIGY. The segment at 71–77 is complementarity-determining-2; the sequence is IYYSGST. Positions 78 to 115 are framework-3; that stretch reads YYNPSLKSRVTMSVDTSKNQFSLKLSSVTAVDTAVYYC. The tract at residues 116–117 is complementarity-determining-3; it reads AR.

As to quaternary structure, immunoglobulins are composed of two identical heavy chains and two identical light chains; disulfide-linked.

The protein localises to the secreted. Its subcellular location is the cell membrane. Its function is as follows. V region of the variable domain of immunoglobulin heavy chains that participates in the antigen recognition. Immunoglobulins, also known as antibodies, are membrane-bound or secreted glycoproteins produced by B lymphocytes. In the recognition phase of humoral immunity, the membrane-bound immunoglobulins serve as receptors which, upon binding of a specific antigen, trigger the clonal expansion and differentiation of B lymphocytes into immunoglobulins-secreting plasma cells. Secreted immunoglobulins mediate the effector phase of humoral immunity, which results in the elimination of bound antigens. The antigen binding site is formed by the variable domain of one heavy chain, together with that of its associated light chain. Thus, each immunoglobulin has two antigen binding sites with remarkable affinity for a particular antigen. The variable domains are assembled by a process called V-(D)-J rearrangement and can then be subjected to somatic hypermutations which, after exposure to antigen and selection, allow affinity maturation for a particular antigen. This chain is Immunoglobulin heavy variable 4-28, found in Homo sapiens (Human).